A 94-amino-acid chain; its full sequence is Large ribosomal subunit protein eL31 (94 aa).

The protein belongs to the eukaryotic ribosomal protein eL31 family.

The polypeptide is Large ribosomal subunit protein eL31 (rpl31e) (Pyrococcus abyssi (strain GE5 / Orsay)).